Here is a 68-residue protein sequence, read N- to C-terminus: Large ribosomal subunit protein uL29 (68 aa).

This sequence belongs to the universal ribosomal protein uL29 family.

This chain is Large ribosomal subunit protein uL29, found in Acidiphilium cryptum (strain JF-5).